We begin with the raw amino-acid sequence, 347 residues long: Anthranilate phosphoribosyltransferase (347 aa).

Residues G88, 91–92 (GD), T96, 98–101 (NIST), 116–124 (KHGNRAASS), and S128 each bind 5-phospho-alpha-D-ribose 1-diphosphate. An anthranilate-binding site is contributed by G88. Position 100 (S100) interacts with Mg(2+). Anthranilate is bound at residue N119. R174 contributes to the anthranilate binding site. The Mg(2+) site is built by D233 and E234.

Belongs to the anthranilate phosphoribosyltransferase family. As to quaternary structure, homodimer. Mg(2+) serves as cofactor.

The catalysed reaction is N-(5-phospho-beta-D-ribosyl)anthranilate + diphosphate = 5-phospho-alpha-D-ribose 1-diphosphate + anthranilate. The protein operates within amino-acid biosynthesis; L-tryptophan biosynthesis; L-tryptophan from chorismate: step 2/5. Functionally, catalyzes the transfer of the phosphoribosyl group of 5-phosphorylribose-1-pyrophosphate (PRPP) to anthranilate to yield N-(5'-phosphoribosyl)-anthranilate (PRA). In Rhodospirillum rubrum (strain ATCC 11170 / ATH 1.1.1 / DSM 467 / LMG 4362 / NCIMB 8255 / S1), this protein is Anthranilate phosphoribosyltransferase.